A 294-amino-acid polypeptide reads, in one-letter code: Indole-3-glycerol phosphate synthase (294 aa).

It belongs to the TrpC family.

It catalyses the reaction 1-(2-carboxyphenylamino)-1-deoxy-D-ribulose 5-phosphate + H(+) = (1S,2R)-1-C-(indol-3-yl)glycerol 3-phosphate + CO2 + H2O. It functions in the pathway amino-acid biosynthesis; L-tryptophan biosynthesis; L-tryptophan from chorismate: step 4/5. In Parasynechococcus marenigrum (strain WH8102), this protein is Indole-3-glycerol phosphate synthase.